Reading from the N-terminus, the 892-residue chain is Putative disease resistance protein At4g10780 (892 aa).

Residues 24-63 (SLGNYIHKLKDNIVALEKAIEDLTATRDDVLRRVQMEEGK) are a coiled coil. Residues 137 to 440 (IVAAPAPKLE…ICEGFIDGNI (304 aa)) enclose the NB-ARC domain. 180–187 (GMGGVGKT) is a binding site for ATP. LRR repeat units follow at residues 515–536 (AVRRLSLMNNGIEEISGSPECP), 537–559 (ELTTLFLQENKSLVHISGEFFRH), 562–584 (KLVVLDLSENHQLDGLPEQISEL), 586–608 (ALRYLDLSHTNIEGLPACLQDLK), 609–631 (TLIHLNLECMRRLGSIAGISKLS), and 632–654 (SLRTLGLRNSNIMLDVMSVKELH).

Belongs to the disease resistance NB-LRR family.

In terms of biological role, potential disease resistance protein. The protein is Putative disease resistance protein At4g10780 of Arabidopsis thaliana (Mouse-ear cress).